A 1025-amino-acid polypeptide reads, in one-letter code: MKFFALFIYRPVATILLSVAITLCGILGFRMLPVAPLPQVDFPVIMVSASLPSASPETMASSVATPLERSLGRIAGVSEMTSSSSLGSTRIILQFDFDRDINGAARDVQAAINAAQSLLPSGMPSRPTYRKANPSDAPIMILTLTSDTYSQGELYDFASTQLAPTISQIDGVGDVDVGGSSLPAVRVGLNPQALFNQGVSLDDVRTAISNANVRKPQGALEDGTHRWQIQTNDELKTAAEYQPLIIHYNNGGAVRLGDVATVTDSVQDVRNAGMTNAKPAILLMIRKLPEANIIQTVDSIRARLPELQSTIPAAIDLQIAQDRSPTIRASLEEVEQTLIISVALVILVVFLFLRSGRATIIPAVAVPVSLIGTFAAMYLCGFSLNNLSLMALTIATGFVVDDAIVVLENIARHLEAGMKPLQAALQGTREVGFTVLSMSLSLVAVFLPLLLMGGLPGRLLREFAVTLSVAIGISLLVSLTLTPMMCGWMLKASKPREQKRLRGFGRVLVALQQGYGKSLKWVLNHTRLVGVVLLGTIALNIWLYISIPKTFFPEQDTGVLMGGIQADQSISFQAMRGKLQDFMKIIRDDPAVDNVTGFTGGSRVNSGMMFITLKPRDERSETAQQIIDRLRVKLAKEPGANLFLMAVQDIRVGGRQANASYQYTLLSDDLPALREWEPKIRKKLATLPELADVNSDQQDNGAEMNLVYDRDTMARLGIDVQAANSLLNNAFGQRQISTIYQPMNQYKVVMEVDPRYTQDISALEKMFVINNEGKAIPLSYFAKWQPANAPLSVNHQGLSAASTISFNLPTGKSLSDASAAIDRAMTQLGVPSTVRGSFAGTAQVFQETMNSQVILIIAAIATVYIVLGILYESYVHPLTILSTLPSAGVGALLALELFNAPFSLIALIGIMLLIGIVKKNAIMMVDFALEAQRHGNLTPQEAIFQACLLRFRPIMMTTLAALFGALPLVLSGGDGSELRQPLGITIVGGLVMSQLLTLYTTPVVYLFFDRLRLRFSRKPKQAVTE.

12 helical membrane-spanning segments follow: residues 3–23 (FFAL…AITL), 333–353 (EVEQ…FLFL), 360–380 (IIPA…MYLC), 387–407 (LSLM…IVVL), 431–451 (VGFT…PLLL), 463–483 (FAVT…TLTP), 528–548 (LVGV…ISIP), 853–873 (VILI…LYES), 875–895 (VHPL…LLAL), 897–917 (LFNA…IGIV), 953–973 (PIMM…LSGG), and 984–1004 (ITIV…TPVV).

This sequence belongs to the resistance-nodulation-cell division (RND) (TC 2.A.6) family. MdtC subfamily. In terms of assembly, part of a tripartite efflux system composed of MdtA, MdtB and MdtC. MdtC forms a heteromultimer with MdtB.

It is found in the cell inner membrane. Its function is as follows. The MdtABC tripartite complex confers resistance against novobiocin and deoxycholate. In Escherichia coli O7:K1 (strain IAI39 / ExPEC), this protein is Multidrug resistance protein MdtC.